The following is a 404-amino-acid chain: Methionine aminopeptidase 1D, mitochondrial (404 aa).

A mitochondrion-targeting transit peptide spans 1-58; it reads MNKILKNIINKSSINNVFKTSFNGGISSSSSSSSSYLNNNNNIIKSYNVQQKQQQRYY. The tract at residues 86-109 is disordered; that stretch reads VRSQRLTKKTASPLEGMNRKERRK. H232 contributes to the substrate binding site. D249, D260, and H323 together coordinate a divalent metal cation. Residue H330 coordinates substrate. A divalent metal cation is bound by residues E355 and E389.

Belongs to the peptidase M24A family. Methionine aminopeptidase type 1 subfamily. Co(2+) serves as cofactor. The cofactor is Zn(2+). It depends on Mn(2+) as a cofactor. Fe(2+) is required as a cofactor.

It is found in the mitochondrion. It catalyses the reaction Release of N-terminal amino acids, preferentially methionine, from peptides and arylamides.. Functionally, removes the N-terminal methionine from nascent proteins. The N-terminal methionine is often cleaved when the second residue in the primary sequence is small and uncharged (Met-Ala-, Cys, Gly, Pro, Ser, Thr, or Val). The polypeptide is Methionine aminopeptidase 1D, mitochondrial (metap1d) (Dictyostelium discoideum (Social amoeba)).